Consider the following 431-residue polypeptide: 3-phosphoshikimate 1-carboxyvinyltransferase (431 aa).

3-phosphoshikimate contacts are provided by Lys-21, Ser-22, and Arg-26. Lys-21 serves as a coordination point for phosphoenolpyruvate. Phosphoenolpyruvate-binding residues include Gly-93 and Arg-121. Residues Ser-166, Gln-168, Asp-318, and Lys-345 each contribute to the 3-phosphoshikimate site. Gln-168 contacts phosphoenolpyruvate. The active-site Proton acceptor is the Asp-318. The phosphoenolpyruvate site is built by Arg-349 and Arg-391.

The protein belongs to the EPSP synthase family. Monomer.

It is found in the cytoplasm. It catalyses the reaction 3-phosphoshikimate + phosphoenolpyruvate = 5-O-(1-carboxyvinyl)-3-phosphoshikimate + phosphate. It participates in metabolic intermediate biosynthesis; chorismate biosynthesis; chorismate from D-erythrose 4-phosphate and phosphoenolpyruvate: step 6/7. Its function is as follows. Catalyzes the transfer of the enolpyruvyl moiety of phosphoenolpyruvate (PEP) to the 5-hydroxyl of shikimate-3-phosphate (S3P) to produce enolpyruvyl shikimate-3-phosphate and inorganic phosphate. In Sulfurihydrogenibium sp. (strain YO3AOP1), this protein is 3-phosphoshikimate 1-carboxyvinyltransferase.